The sequence spans 208 residues: Outer-membrane lipoprotein carrier protein (208 aa).

The first 22 residues, 1-22 (MRKTLSILAISLPLLVSGYAQA), serve as a signal peptide directing secretion.

The protein belongs to the LolA family. Monomer.

It is found in the periplasm. Functionally, participates in the translocation of lipoproteins from the inner membrane to the outer membrane. Only forms a complex with a lipoprotein if the residue after the N-terminal Cys is not an aspartate (The Asp acts as a targeting signal to indicate that the lipoprotein should stay in the inner membrane). The chain is Outer-membrane lipoprotein carrier protein from Shewanella sediminis (strain HAW-EB3).